A 72-amino-acid polypeptide reads, in one-letter code: Protein LITTLE ZIPPER 4 (72 aa).

Residues 14-44 are a coiled coil; that stretch reads YIIKENERLRKKAQILNQENQQLLFELKQKL. Residues 42–72 form a disordered region; sequence QKLSKTKNSSGSNQGNNNNNNNLSSSSSASG. Residues 49-72 are compositionally biased toward low complexity; the sequence is NSSGSNQGNNNNNNNLSSSSSASG.

Interacts with REV.

Functionally, competitive inhibitor of the HD-ZIPIII transcription factors in shoot apical meristem (SAM) development. Acts by forming non-functional heterodimers. Part of a negative feedback loop. Essential for proper functioning of stem cells in the SAM. In Arabidopsis thaliana (Mouse-ear cress), this protein is Protein LITTLE ZIPPER 4.